A 294-amino-acid polypeptide reads, in one-letter code: Acetylglutamate kinase (294 aa).

Residues 60–61, Arg82, and Asn186 each bind substrate; that span reads GG.

It belongs to the acetylglutamate kinase family. ArgB subfamily.

The protein resides in the cytoplasm. The catalysed reaction is N-acetyl-L-glutamate + ATP = N-acetyl-L-glutamyl 5-phosphate + ADP. The protein operates within amino-acid biosynthesis; L-arginine biosynthesis; N(2)-acetyl-L-ornithine from L-glutamate: step 2/4. Functionally, catalyzes the ATP-dependent phosphorylation of N-acetyl-L-glutamate. The sequence is that of Acetylglutamate kinase from Methanospirillum hungatei JF-1 (strain ATCC 27890 / DSM 864 / NBRC 100397 / JF-1).